The sequence spans 349 residues: Beta-hexosaminidase (349 aa).

Substrate contacts are provided by residues aspartate 64, arginine 72, arginine 138, and 168-169 (KH). The Proton donor/acceptor role is filled by histidine 181. The active-site Nucleophile is aspartate 252.

It belongs to the glycosyl hydrolase 3 family. NagZ subfamily.

The protein localises to the cytoplasm. It carries out the reaction Hydrolysis of terminal non-reducing N-acetyl-D-hexosamine residues in N-acetyl-beta-D-hexosaminides.. The protein operates within cell wall biogenesis; peptidoglycan recycling. In terms of biological role, plays a role in peptidoglycan recycling by cleaving the terminal beta-1,4-linked N-acetylglucosamine (GlcNAc) from peptide-linked peptidoglycan fragments, giving rise to free GlcNAc, anhydro-N-acetylmuramic acid and anhydro-N-acetylmuramic acid-linked peptides. The polypeptide is Beta-hexosaminidase (Methylobacillus flagellatus (strain ATCC 51484 / DSM 6875 / VKM B-1610 / KT)).